The chain runs to 131 residues: Insertion element iso-IS1n protein InsB (131 aa).

This sequence belongs to the transposase 27 family.

Functionally, absolutely required for transposition of IS1. In Shigella dysenteriae, this protein is Insertion element iso-IS1n protein InsB (insB).